The following is a 364-amino-acid chain: Putative galactoside 2-alpha-L-fucosyltransferase svh-11 (364 aa).

At 1 to 19 (MRLFHFLKFLTINNFSRYC) the chain is on the cytoplasmic side. The chain crosses the membrane as a helical; Signal-anchor for type II membrane protein span at residues 20-42 (LKIVKVHIIWITIICIIYFNWRF). Topologically, residues 43 to 364 (KKLDFMAIPY…SANSFTVVRS (322 aa)) are lumenal. Asn60 and Asn128 each carry an N-linked (GlcNAc...) asparagine glycan.

It belongs to the glycosyltransferase 11 family.

It localises to the golgi apparatus. Its subcellular location is the golgi stack membrane. Its function is as follows. Mediates the transfer of fucose to the terminal galactose on glycan chains of cell surface glycoproteins and glycolipids. Required for axon regeneration after injury. The protein is Putative galactoside 2-alpha-L-fucosyltransferase svh-11 of Caenorhabditis elegans.